We begin with the raw amino-acid sequence, 329 residues long: ADP-L-glycero-D-manno-heptose-6-epimerase (329 aa).

NADP(+) contacts are provided by residues 10–11 (FI), 31–32 (DD), lysine 38, lysine 53, 74–78 (QGACS), and asparagine 91. The Proton acceptor role is filled by tyrosine 138. Lysine 142 lines the NADP(+) pocket. Position 167 (asparagine 167) interacts with substrate. Positions 168 and 176 each coordinate NADP(+). Lysine 176 functions as the Proton acceptor in the catalytic mechanism. Residues arginine 178, histidine 185, 199–202 (FAGW), arginine 212, and tyrosine 291 contribute to the substrate site.

It belongs to the NAD(P)-dependent epimerase/dehydratase family. HldD subfamily. As to quaternary structure, homopentamer. It depends on NADP(+) as a cofactor.

It catalyses the reaction ADP-D-glycero-beta-D-manno-heptose = ADP-L-glycero-beta-D-manno-heptose. It functions in the pathway nucleotide-sugar biosynthesis; ADP-L-glycero-beta-D-manno-heptose biosynthesis; ADP-L-glycero-beta-D-manno-heptose from D-glycero-beta-D-manno-heptose 7-phosphate: step 4/4. It participates in bacterial outer membrane biogenesis; LPS core biosynthesis. Functionally, catalyzes the interconversion between ADP-D-glycero-beta-D-manno-heptose and ADP-L-glycero-beta-D-manno-heptose via an epimerization at carbon 6 of the heptose. This chain is ADP-L-glycero-D-manno-heptose-6-epimerase, found in Bordetella pertussis (strain Tohama I / ATCC BAA-589 / NCTC 13251).